A 152-amino-acid chain; its full sequence is MAQNKNLNLELSLSQYVEDDPWVLKKKLSDSDLYYSAQLYLPKQEMEHFVLPEMDHDLVRKLGAGVEVKVRDVDSVDDFYTVRLKVRNGQYYLGKGWGLIKNAKVLNTGDHIGLFWDKLTREVKFKHFKSQSITMHREAGTTSTQKNVLQKK.

Positions Leu-24 to Gln-131 form a DNA-binding region, TF-B3.

It is found in the nucleus. This chain is B3 domain-containing protein At1g10455, found in Arabidopsis thaliana (Mouse-ear cress).